The chain runs to 270 residues: Tryptophan synthase alpha chain (270 aa).

Residues E51 and D62 each act as proton acceptor in the active site.

It belongs to the TrpA family. In terms of assembly, tetramer of two alpha and two beta chains.

The catalysed reaction is (1S,2R)-1-C-(indol-3-yl)glycerol 3-phosphate + L-serine = D-glyceraldehyde 3-phosphate + L-tryptophan + H2O. The protein operates within amino-acid biosynthesis; L-tryptophan biosynthesis; L-tryptophan from chorismate: step 5/5. Its function is as follows. The alpha subunit is responsible for the aldol cleavage of indoleglycerol phosphate to indole and glyceraldehyde 3-phosphate. The polypeptide is Tryptophan synthase alpha chain (Methanothermobacter thermautotrophicus (strain ATCC 29096 / DSM 1053 / JCM 10044 / NBRC 100330 / Delta H) (Methanobacterium thermoautotrophicum)).